The chain runs to 801 residues: Phenylalanine--tRNA ligase beta subunit (801 aa).

In terms of domain architecture, tRNA-binding spans 39–152 (ARAFSGVVVG…TDAPIGTDIR (114 aa)). Positions 407-482 (PARAPITLPI…RIYGYDNIPS (76 aa)) constitute a B5 domain. Residues Asp-460, Asp-466, Glu-469, and Glu-470 each coordinate Mg(2+). Residues 706–799 (SKFPQVRRDI…LTVEHSAQLR (94 aa)) enclose the FDX-ACB domain.

It belongs to the phenylalanyl-tRNA synthetase beta subunit family. Type 1 subfamily. As to quaternary structure, tetramer of two alpha and two beta subunits. Requires Mg(2+) as cofactor.

The protein resides in the cytoplasm. The catalysed reaction is tRNA(Phe) + L-phenylalanine + ATP = L-phenylalanyl-tRNA(Phe) + AMP + diphosphate + H(+). This is Phenylalanine--tRNA ligase beta subunit from Psychrobacter arcticus (strain DSM 17307 / VKM B-2377 / 273-4).